The chain runs to 227 residues: MICOS complex subunit MIC19 (227 aa).

Gly2 is lipidated: N-myristoyl glycine. Phosphoserine is present on Ser29. 2 disordered regions span residues 34-61 (DRMKESSPSGSKSQRYSGAYGASVSDEE) and 73-92 (EQAKKESEDQKRLKQAKELD). Residues 39-49 (SSPSGSKSQRY) show a composition bias toward polar residues. Phosphotyrosine is present on Tyr49. Phosphoserine is present on residues Ser50, Ser56, and Ser58. The residue at position 142 (Lys142) is an N6-acetyllysine. One can recognise a CHCH domain in the interval 180-222 (HPVCADLQAKILQCYRENTHQTLKCSALATQYMHCVNHAKQSM). 2 short sequence motifs (cx9C motif) span residues 183-193 (CADLQAKILQC) and 204-214 (CSALATQYMHC). Disulfide bonds link Cys183–Cys214 and Cys193–Cys204.

The protein belongs to the MICOS complex subunit Mic19 family. Metazoan Mic19 subfamily. In terms of assembly, component of the mitochondrial contact site and cristae organizing system (MICOS) complex, composed of at least MICOS10/MIC10, CHCHD3/MIC19, CHCHD6/MIC25, APOOL/MIC27, IMMT/MIC60, APOO/MIC23/MIC26 and MICOS13/MIC13. This complex was also known under the names MINOS or MitOS complex. The MICOS complex associates with mitochondrial outer membrane proteins SAMM50, MTX1 and MTX2 (together described as components of the mitochondrial outer membrane sorting assembly machinery (SAM) complex) and DNAJC11, mitochondrial inner membrane protein TMEM11 and with HSPA9. The MICOS and SAM complexes together with DNAJC11 are part of a large protein complex spanning both membranes termed the mitochondrial intermembrane space bridging (MIB) complex. Interacts with HSPA1A/HSPA1B and OPA1, preferentially with the soluble OPA1 form. Interacts with IMMT/MIC60. (Microbial infection) Interacts with human cytomegalovirus protein UL13; this interaction alters cristae architecture. Detected at low levels in brain, placenta, lung, liver, kidney and pancreas with increased levels in heart and skeletal muscle. Higher expression in primary lung cancers than in normal lung tissue.

The protein localises to the mitochondrion inner membrane. It localises to the cytoplasm. The protein resides in the nucleus. It is found in the mitochondrion. Component of the MICOS complex, a large protein complex of the mitochondrial inner membrane that plays crucial roles in the maintenance of crista junctions, inner membrane architecture, and formation of contact sites to the outer membrane. Plays an important role in the maintenance of the MICOS complex stability and the mitochondrial cristae morphology. Has also been shown to function as a transcription factor which binds to the BAG1 promoter and represses BAG1 transcription. In Homo sapiens (Human), this protein is MICOS complex subunit MIC19 (CHCHD3).